A 407-amino-acid chain; its full sequence is Phosphonoacetate hydrolase (407 aa).

The Zn(2+) site is built by aspartate 25, threonine 64, aspartate 202, histidine 206, aspartate 241, histidine 242, and histidine 368. Residues threonine 64 and aspartate 202 each contribute to the substrate site. Histidine 242 and histidine 368 together coordinate substrate.

The protein belongs to the alkaline phosphatase family. PhnA subfamily. In terms of assembly, homodimer. Zn(2+) is required as a cofactor.

It carries out the reaction phosphonoacetate + H2O = acetate + phosphate + H(+). Functionally, specifically hydrolyzes phosphonoacetate. Does not have activity on other organophosphonates or acetates. This Pseudomonas cedrina protein is Phosphonoacetate hydrolase.